The sequence spans 90 residues: Phaiodotoxin (90 aa).

A signal peptide spans 1–18 (MKTIPLLFLLFIYFECDG). In terms of domain architecture, LCN-type CS-alpha/beta spans 19 to 90 (KFIRHKDESF…CFGALESKCA (72 aa)). 4 cysteine pairs are disulfide-bonded: Cys31–Cys56, Cys41–Cys68, Cys45–Cys70, and Cys81–Cys89.

As to expression, expressed by the venom gland.

It localises to the secreted. In terms of biological role, sodium channel (Nav) specific neurotoxin. Causes impairment of movement and mild paralysis in crickets at a dose of 0.5 ug per animal. A dose of 0.8 ug per cricket causes clear flaccid paralysis. A dose of 1.0 ug per cricket causes death within 2 hours. Is not toxic to mice at a dose of 100 ug per 20 g mouse weight. In Anuroctonus phaiodactylus (Mafia scorpion), this protein is Phaiodotoxin.